The following is a 367-amino-acid chain: Phosphoribosylaminoimidazole-succinocarboxamide synthase (367 aa).

This sequence belongs to the SAICAR synthetase family.

It carries out the reaction 5-amino-1-(5-phospho-D-ribosyl)imidazole-4-carboxylate + L-aspartate + ATP = (2S)-2-[5-amino-1-(5-phospho-beta-D-ribosyl)imidazole-4-carboxamido]succinate + ADP + phosphate + 2 H(+). It functions in the pathway purine metabolism; IMP biosynthesis via de novo pathway; 5-amino-1-(5-phospho-D-ribosyl)imidazole-4-carboxamide from 5-amino-1-(5-phospho-D-ribosyl)imidazole-4-carboxylate: step 1/2. The protein is Phosphoribosylaminoimidazole-succinocarboxamide synthase of Vibrio parahaemolyticus serotype O3:K6 (strain RIMD 2210633).